The following is a 380-amino-acid chain: Ceramide synthase 2 (380 aa).

Topologically, residues 1–40 (MLQTLYDYFWWERLWLPVNLTWADLEDRDGRVYAKASDLY) are lumenal. The N-linked (GlcNAc...) asparagine glycan is linked to N19. The chain crosses the membrane as a helical span at residues 41–61 (ITLPLALLFLIVRYFFELYVA). A homeobox-like region spans residues 67–128 (LLNIKEKTRL…RRRRNQDRPS (62 aa)). The region spanning 131–332 (KKFREASWRF…ILRMAHKFIT (202 aa)) is the TLC domain. Helical transmembrane passes span 140 to 160 (FTFYLIAFIAGMAVIVDKPWF), 181 to 201 (WYYMIELSFYWSLLFSIASDV), 209 to 229 (QIIHHVATIILISFSWFANYI), and 264 to 284 (IFIVFAIVFIITRLVILPFWI). Residues 291-300 (YPLELYPAFF) carry the Last loop motif motif. The chain crosses the membrane as a helical span at residues 304 to 324 (FFNSMMGVLQLLHIFWAYLIL). The Cytoplasmic segment spans residues 325–380 (RMAHKFITGKLVEDERSDREETESSEGEEAAAGGGAKSRPLANGHPILNNNHRKND). The interval 338 to 380 (DERSDREETESSEGEEAAAGGGAKSRPLANGHPILNNNHRKND) is disordered. At S341 the chain carries Phosphoserine. Over residues 344 to 353 (EETESSEGEE) the composition is skewed to acidic residues. T346 is subject to Phosphothreonine. 2 positions are modified to phosphoserine: S348 and S349.

As to quaternary structure, interacts with ATP6V0C, ASGR1, ASGR2 and SLC22A1/OCT1. Interacts with ELOV1, HSD17B12 and TECR. Interacts with NDUFS2. Interacts with PAQR4; the interaction regulates the stability and activity of CERS2 and is inhibited in presence of ceramides. Acetylated. Deacetylation by SIRT3 increases enzyme activity and promotes mitochondrial ceramide accumulation. Post-translationally, phosphorylated at the C-terminus by CK2, leading to increase the ceramide synthase activity. As to expression, expressed in kidney, liver, brain, heart, placenta and lung.

Its subcellular location is the endoplasmic reticulum membrane. The catalysed reaction is a very long-chain fatty acyl-CoA + a sphingoid base = an N-(very-long-chain fatty acyl)-sphingoid base + CoA + H(+). The enzyme catalyses docosanoyl-CoA + sphinganine = N-docosanoylsphinganine + CoA + H(+). It carries out the reaction tetracosanoyl-CoA + sphinganine = N-tetracosanoylsphinganine + CoA + H(+). It catalyses the reaction hexacosanoyl-CoA + sphinganine = N-hexacosanoylsphinganine + CoA + H(+). The catalysed reaction is (15Z)-tetracosenoyl-CoA + sphinganine = N-(15Z-tetracosenoyl)-sphinganine + CoA + H(+). The enzyme catalyses 2-hydroxytetracosanoyl-CoA + sphinganine = N-(2-hydroxytetracosanoyl)-sphinganine + CoA + H(+). It carries out the reaction 2-hydroxydocosanoyl-CoA + sphinganine = N-(2-hydroxydocosanoyl)-sphinganine + CoA + H(+). It catalyses the reaction 2-hydroxytetracosenoyl-CoA + sphinganine = N-(2-hydroxytetracosenoyl)-sphinganine + CoA + H(+). The catalysed reaction is tetracosenoyl-CoA + sphinganine = an N-tetracosenoylsphinganine + CoA + H(+). The enzyme catalyses hexacosenoyl-CoA + sphinganine = N-hexacosenoylsphinganine + CoA + H(+). It carries out the reaction tetracosanoyl-CoA + sphing-4-enine = N-tetracosanoyl-sphing-4-enine + CoA + H(+). It catalyses the reaction tetracosenoyl-CoA + sphing-4-enine = N-(tetracosenoyl)-sphing-4-enine + CoA + H(+). The catalysed reaction is heptadecasphing-4-enine + tetracosanoyl-CoA = N-tetracosanoyl-heptadecasphing-4-enine + CoA + H(+). The enzyme catalyses a fatty acyl-CoA + sphing-4-enine = an N-acylsphing-4-enine + CoA + H(+). It carries out the reaction sphing-4-enine + hexadecanoyl-CoA = N-hexadecanoylsphing-4-enine + CoA + H(+). It catalyses the reaction sphing-4-enine + octadecanoyl-CoA = N-octadecanoylsphing-4-enine + CoA + H(+). The catalysed reaction is eicosanoyl-CoA + sphing-4-enine = N-eicosanoyl-sphing-4-enine + CoA + H(+). The enzyme catalyses sphinganine + hexadecanoyl-CoA = N-hexadecanoylsphinganine + CoA + H(+). It carries out the reaction sphinganine + octadecanoyl-CoA = N-(octadecanoyl)-sphinganine + CoA + H(+). It catalyses the reaction sphinganine + (9Z)-octadecenoyl-CoA = N-(9Z-octadecenoyl)-sphinganine + CoA + H(+). The catalysed reaction is eicosanoyl-CoA + sphinganine = N-eicosanoylsphinganine + CoA + H(+). The protein operates within lipid metabolism; sphingolipid metabolism. Its activity is regulated as follows. Ceramide synthase activity is inhibited by sphingosine-1-phosphate. In terms of biological role, ceramide synthase that catalyzes the transfer of the acyl chain from acyl-CoA to a sphingoid base, with high selectivity toward very-long-chain fatty acyl-CoA (chain length C22-C27). N-acylates sphinganine and sphingosine bases to form dihydroceramides and ceramides in de novo synthesis and salvage pathways, respectively. Plays a non-redundant role in the synthesis of ceramides with very-long-chain fatty acids in kidney, liver and brain. Regulates the abundance of myelin-specific sphingolipids galactosylceramide and sulfatide that affects myelin sheath architecture and motor neuron functions. This Homo sapiens (Human) protein is Ceramide synthase 2.